A 457-amino-acid polypeptide reads, in one-letter code: Sensor protein CpxA (457 aa).

Over 1–7 the chain is Cytoplasmic; it reads MIGSLTA. Residues 8–29 form a helical membrane-spanning segment; it reads RIFAIFWLTLALVLMLVLMLPK. Topologically, residues 30-163 are periplasmic; the sequence is LDSRQMTELL…SDFINLLFDR (134 aa). Residues 164–184 form a helical membrane-spanning segment; the sequence is PLLLLIVTMLVSTPLLLWLAW. Positions 185-237 constitute an HAMP domain; it reads SLAKPARKLKNAADEVAQGNLRQHPELEAGPQEFLAAGASFNQMVTALERMMT. Topologically, residues 185–457 are cytoplasmic; it reads SLAKPARKLK…VIWLPLYKRS (273 aa). Residues 245-455 enclose the Histidine kinase domain; it reads DISHELRTPL…RLVIWLPLYK (211 aa). At His-248 the chain carries Phosphohistidine; by autocatalysis.

The protein localises to the cell inner membrane. It catalyses the reaction ATP + protein L-histidine = ADP + protein N-phospho-L-histidine.. Its function is as follows. This protein is involved in several diverse cellular processes, such as the functioning of acetohydroxyacid synthetase I, in the biosynthesis of isoleucine and valine, the TraJ protein activation activity for tra gene expression in F plasmid, and the synthesis, translocation, or stability of cell envelope proteins. Activates CpxR by phosphorylation. This chain is Sensor protein CpxA (cpxA), found in Escherichia coli O157:H7.